A 347-amino-acid chain; its full sequence is tRNA N6-adenosine threonylcarbamoyltransferase (347 aa).

Residues histidine 111 and histidine 115 each coordinate Fe cation. Residues 133–137, aspartate 166, glycine 179, and asparagine 278 each bind substrate; that span reads LASGG. Aspartate 306 lines the Fe cation pocket.

This sequence belongs to the KAE1 / TsaD family. The cofactor is Fe(2+).

It localises to the cytoplasm. The enzyme catalyses L-threonylcarbamoyladenylate + adenosine(37) in tRNA = N(6)-L-threonylcarbamoyladenosine(37) in tRNA + AMP + H(+). Functionally, required for the formation of a threonylcarbamoyl group on adenosine at position 37 (t(6)A37) in tRNAs that read codons beginning with adenine. Is involved in the transfer of the threonylcarbamoyl moiety of threonylcarbamoyl-AMP (TC-AMP) to the N6 group of A37, together with TsaE and TsaB. TsaD likely plays a direct catalytic role in this reaction. The sequence is that of tRNA N6-adenosine threonylcarbamoyltransferase from Paramagnetospirillum magneticum (strain ATCC 700264 / AMB-1) (Magnetospirillum magneticum).